The chain runs to 99 residues: NADH-quinone oxidoreductase subunit K (99 aa).

3 helical membrane passes run 3 to 23 (PANYLILSGLLFTIGATGVLV), 28 to 48 (IVVFMSIELMLNAVNLTLVTF), and 62 to 82 (FFVMVVAAAEVVVGLAIILAI).

Belongs to the complex I subunit 4L family. NDH-1 is composed of 14 different subunits. Subunits NuoA, H, J, K, L, M, N constitute the membrane sector of the complex.

It is found in the cell membrane. The catalysed reaction is a quinone + NADH + 5 H(+)(in) = a quinol + NAD(+) + 4 H(+)(out). Functionally, NDH-1 shuttles electrons from NADH, via FMN and iron-sulfur (Fe-S) centers, to quinones in the respiratory chain. The immediate electron acceptor for the enzyme in this species is believed to be a menaquinone. Couples the redox reaction to proton translocation (for every two electrons transferred, four hydrogen ions are translocated across the cytoplasmic membrane), and thus conserves the redox energy in a proton gradient. This is NADH-quinone oxidoreductase subunit K from Parafrankia sp. (strain EAN1pec).